Reading from the N-terminus, the 402-residue chain is Tryptophan synthase beta chain 2 (402 aa).

K97 is modified (N6-(pyridoxal phosphate)lysine).

The protein belongs to the TrpB family. In terms of assembly, tetramer of two alpha and two beta chains. Pyridoxal 5'-phosphate serves as cofactor.

It catalyses the reaction (1S,2R)-1-C-(indol-3-yl)glycerol 3-phosphate + L-serine = D-glyceraldehyde 3-phosphate + L-tryptophan + H2O. It functions in the pathway amino-acid biosynthesis; L-tryptophan biosynthesis; L-tryptophan from chorismate: step 5/5. The beta subunit is responsible for the synthesis of L-tryptophan from indole and L-serine. The protein is Tryptophan synthase beta chain 2 (trpB2) of Wolinella succinogenes (strain ATCC 29543 / DSM 1740 / CCUG 13145 / JCM 31913 / LMG 7466 / NCTC 11488 / FDC 602W) (Vibrio succinogenes).